The following is a 522-amino-acid chain: MDATELGVSGEGEEIDMEVMRPLIESEDRFEGTYGEKKHLQRYLNSDNKKDEEVMKPLIENEDDSDGTCDEHQYLQRHPDLDNKDGLTFFQTLIHLLKGNIGTGLLGLPLAMKNAGVLLGPISLLFFGIISIHCMNILVRCSHFLCQRYKKANLGYSDTVGLALEVGPGVLQRHASFGRNLVDWFLVVTQLGFCSVYFVFLAENIKQVFEVFLETKLQQSEIGIWSLDLRIYMFSFLPLIIPLVFIRDLKNLSLLSFFANVSMAISLLIVYQYVIRNLSDPRTLPLGTSWKTYPLFFGTAIFAFEGIGVVLPLENRMRDKKDFSKALNIGMAIVTTLYISLATLGYFCFGDQIKGSITLNLPQDSWLYQLVKILYSFGIYVTYAIQYYVPAEIILPAVTSRVQKTRKLLCEFTMRFFLVCLTCAVAVLIPRLDLVISFVGAVSSSTLALILPPLVEIITYHKENLSPWVIMKDVGIAVIGFVGFIAGTYVTIEEMIYPISYVPPNVSHSDFGVLNNTVLEGH.

The next 10 helical transmembrane spans lie at 115–135 (AGVLLGPISLLFFGIISIHCM), 181–201 (LVDWFLVVTQLGFCSVYFVFL), 226–246 (SLDLRIYMFSFLPLIIPLVFI), 255–275 (LSFFANVSMAISLLIVYQYVI), 293–313 (YPLFFGTAIFAFEGIGVVLPL), 329–349 (IGMAIVTTLYISLATLGYFCF), 377–397 (FGIYVTYAIQYYVPAEIILPA), 409–429 (LCEFTMRFFLVCLTCAVAVLI), 435–455 (VISFVGAVSSSTLALILPPLV), and 467–487 (PWVIMKDVGIAVIGFVGFIAG). N515 is a glycosylation site (N-linked (GlcNAc...) asparagine).

It belongs to the amino acid/polyamine transporter 2 family.

The protein resides in the lysosome membrane. The catalysed reaction is L-tryptophan(in) = L-tryptophan(out). The enzyme catalyses L-alanine(in) = L-alanine(out). It catalyses the reaction L-proline(in) = L-proline(out). In terms of biological role, uniporter that mediates the transport of neutral amino acids like L-tryptophan, proline and alanine. The transport activity is sodium ions-independent, electroneutral and therefore functions via facilitated diffusion. This chain is Neutral amino acid uniporter 4, found in Xenopus laevis (African clawed frog).